The sequence spans 245 residues: tRNA (guanine-N(1)-)-methyltransferase (245 aa).

S-adenosyl-L-methionine contacts are provided by residues Gly114 and Ile133–Leu138.

Belongs to the RNA methyltransferase TrmD family. In terms of assembly, homodimer.

It localises to the cytoplasm. It carries out the reaction guanosine(37) in tRNA + S-adenosyl-L-methionine = N(1)-methylguanosine(37) in tRNA + S-adenosyl-L-homocysteine + H(+). Its function is as follows. Specifically methylates guanosine-37 in various tRNAs. This is tRNA (guanine-N(1)-)-methyltransferase from Prochlorococcus marinus (strain MIT 9312).